Consider the following 61-residue polypeptide: Beta-insect depressant toxin BmKIT2 (61 aa).

The 61-residue stretch at 1–61 (DGYIKGKSGC…TWKSESNTCG (61 aa)) folds into the LCN-type CS-alpha/beta domain. 4 cysteine pairs are disulfide-bonded: Cys-10-Cys-60, Cys-14-Cys-35, Cys-21-Cys-42, and Cys-25-Cys-44. Gly-61 bears the Glycine amide mark.

It belongs to the long (4 C-C) scorpion toxin superfamily. Sodium channel inhibitor family. Beta subfamily. Expressed by the venom gland.

The protein resides in the secreted. On insects, this depressant beta-toxins cause a transient contraction paralysis followed by a slow flaccid paralysis. They bind voltage-independently at site-4 of sodium channels (Nav) and shift the voltage of activation toward more negative potentials thereby affecting sodium channel activation and promoting spontaneous and repetitive firing. This toxin is active against insects and mammals. It is capable of binding to not only cockroach neuronal membranes, but also rat cerebrocortical and hippocampal synaptosomes. This toxin also has potent peripheral and central suppressive effects on rat nociceptive spontaneous responses, thermal hyperalgesia and spinal c-Fos expression induced by formalin and carrageenan, which may be derived from its modulation on the activity of sodium channels of the neurons. Administration of BmKIT2 into rat brain can also suppress the epileptic seizures significantly. In Olivierus martensii (Manchurian scorpion), this protein is Beta-insect depressant toxin BmKIT2.